The following is a 298-amino-acid chain: NAD kinase (298 aa).

Catalysis depends on Asp-80, which acts as the Proton acceptor. NAD(+) contacts are provided by residues 80-81, 154-155, Arg-182, Asp-184, 195-200, Ala-219, and Gln-253; these read DG, ND, and TAYALS.

The protein belongs to the NAD kinase family. Requires a divalent metal cation as cofactor.

The protein localises to the cytoplasm. The enzyme catalyses NAD(+) + ATP = ADP + NADP(+) + H(+). Functionally, involved in the regulation of the intracellular balance of NAD and NADP, and is a key enzyme in the biosynthesis of NADP. Catalyzes specifically the phosphorylation on 2'-hydroxyl of the adenosine moiety of NAD to yield NADP. This is NAD kinase from Paracidovorax citrulli (strain AAC00-1) (Acidovorax citrulli).